A 118-amino-acid polypeptide reads, in one-letter code: Non-specific lipid-transfer protein 2A (118 aa).

A signal peptide spans 1–26 (MARAQLVLVALVAAALLLAGPHTTMA). Cystine bridges form between Cys30–Cys77, Cys40–Cys54, Cys55–Cys100, and Cys75–Cys114.

It belongs to the plant LTP family.

Plant non-specific lipid-transfer proteins transfer phospholipids as well as galactolipids across membranes. May play a role in wax or cutin deposition in the cell walls of expanding epidermal cells and certain secretory tissues. The polypeptide is Non-specific lipid-transfer protein 2A (LTP2-A) (Oryza sativa subsp. japonica (Rice)).